The chain runs to 53 residues: MISNYEPLLLLVITCCVLLFNFTISSKTKIDIIFAVQTIVFIWFIFHFVHSAI.

Over 1–4 (MISN) the chain is Intravirion. Residues 5 to 25 (YEPLLLLVITCCVLLFNFTIS) form a helical membrane-spanning segment. The Virion surface segment spans residues 26–29 (SKTK). Residues 30 to 50 (IDIIFAVQTIVFIWFIFHFVH) traverse the membrane as a helical segment. Residues 51–53 (SAI) lie on the Intravirion side of the membrane.

Belongs to the orthopoxvirus OPG141 protein family. Post-translationally, not phosphorylated.

It localises to the virion membrane. Protein probably involved in counteracting host defense, since it enhances virulence in vivo. This is Virion membrane protein OPG141 (OPG141) from Homo sapiens (Human).